The primary structure comprises 76 residues: MKVLSLIFVIFSVLVLFASAKDPVCDQPKAVGRCFAAFPKFYFNSSSGQCEAFIYGGCGGNENNFSTLEECNAKCA.

An N-terminal signal peptide occupies residues 1 to 20 (MKVLSLIFVIFSVLVLFASA). Positions 25-75 (CDQPKAVGRCFAAFPKFYFNSSSGQCEAFIYGGCGGNENNFSTLEECNAKC) constitute a BPTI/Kunitz inhibitor domain. 3 disulfide bridges follow: C25–C75, C34–C58, and C50–C71.

Expressed in salivary glands.

The protein resides in the secreted. In terms of biological role, potent anticoagulant protein that inhibits the hydrolytic activities of all serine proteases tested (trypsin, thrombin, elastase, and chymotrypsin), with the highest efficacy on thrombin. The protein is Tabkunin 2 of Tabanus yao (Horsefly).